The primary structure comprises 1076 residues: Bifunctional glutamine synthetase adenylyltransferase/adenylyl-removing enzyme (1076 aa).

Residues 1 to 521 (MESSMFKPSS…LHLDIYYRPM (521 aa)) form an adenylyl removase region. The tract at residues 524–1076 (VNAQMENDQI…LERNRRRAQR (553 aa)) is adenylyl transferase. The span at 1041 to 1056 (ATATASAATPQPQTAP) shows a compositional bias: low complexity. The segment at 1041–1076 (ATATASAATPQPQTAPRPRMHVIAPRLERNRRRAQR) is disordered.

It belongs to the GlnE family. It depends on Mg(2+) as a cofactor.

The catalysed reaction is [glutamine synthetase]-O(4)-(5'-adenylyl)-L-tyrosine + phosphate = [glutamine synthetase]-L-tyrosine + ADP. The enzyme catalyses [glutamine synthetase]-L-tyrosine + ATP = [glutamine synthetase]-O(4)-(5'-adenylyl)-L-tyrosine + diphosphate. Involved in the regulation of glutamine synthetase GlnA, a key enzyme in the process to assimilate ammonia. When cellular nitrogen levels are high, the C-terminal adenylyl transferase (AT) inactivates GlnA by covalent transfer of an adenylyl group from ATP to specific tyrosine residue of GlnA, thus reducing its activity. Conversely, when nitrogen levels are low, the N-terminal adenylyl removase (AR) activates GlnA by removing the adenylyl group by phosphorolysis, increasing its activity. The regulatory region of GlnE binds the signal transduction protein PII (GlnB) which indicates the nitrogen status of the cell. This Bifidobacterium longum subsp. infantis (strain ATCC 15697 / DSM 20088 / JCM 1222 / NCTC 11817 / S12) protein is Bifunctional glutamine synthetase adenylyltransferase/adenylyl-removing enzyme.